Reading from the N-terminus, the 308-residue chain is Protease HtpX homolog (308 aa).

The next 2 helical transmembrane spans lie at 16–36 and 39–59; these read LLSL…IYAV and YLFG…VLMM. His149 is a binding site for Zn(2+). Residue Glu150 is part of the active site. A Zn(2+)-binding site is contributed by His153. A run of 2 helical transmembrane segments spans residues 161-181 and 192-212; these read VIMA…TTLF and IILA…VLSV. Glu217 provides a ligand contact to Zn(2+).

The protein belongs to the peptidase M48B family. Zn(2+) is required as a cofactor.

The protein resides in the cell membrane. This chain is Protease HtpX homolog, found in Thermoplasma volcanium (strain ATCC 51530 / DSM 4299 / JCM 9571 / NBRC 15438 / GSS1).